The following is a 412-amino-acid chain: Protein png-1 (412 aa).

Positions 150, 153, 182, and 185 each coordinate Zn(2+). Residues 363-412 (AAAARGGRSSPDNKSGANMMGSPATGDIKRPIPEDAPVPDVPSLWPTYGP) are disordered.

The protein belongs to the transglutaminase-like superfamily. PNGase family.

The chain is Protein png-1 (un-7) from Neurospora crassa (strain ATCC 24698 / 74-OR23-1A / CBS 708.71 / DSM 1257 / FGSC 987).